Reading from the N-terminus, the 274-residue chain is Large ribosomal subunit protein uL2 (274 aa).

The tract at residues 224–256 (AMNPIDHPHGGGEGRTGEGRHAVDPWGNLTKGY) is disordered. Residues 229–246 (DHPHGGGEGRTGEGRHAV) show a composition bias toward basic and acidic residues.

The protein belongs to the universal ribosomal protein uL2 family. Part of the 50S ribosomal subunit. Forms a bridge to the 30S subunit in the 70S ribosome.

One of the primary rRNA binding proteins. Required for association of the 30S and 50S subunits to form the 70S ribosome, for tRNA binding and peptide bond formation. It has been suggested to have peptidyltransferase activity; this is somewhat controversial. Makes several contacts with the 16S rRNA in the 70S ribosome. The protein is Large ribosomal subunit protein uL2 of Acidovorax sp. (strain JS42).